We begin with the raw amino-acid sequence, 201 residues long: Adenylyl-sulfate kinase (201 aa).

35–42 (GLSGSGKS) contacts ATP. Ser-109 (phosphoserine intermediate) is an active-site residue.

Belongs to the APS kinase family.

The catalysed reaction is adenosine 5'-phosphosulfate + ATP = 3'-phosphoadenylyl sulfate + ADP + H(+). It functions in the pathway sulfur metabolism; hydrogen sulfide biosynthesis; sulfite from sulfate: step 2/3. Its function is as follows. Catalyzes the synthesis of activated sulfate. This Escherichia coli O139:H28 (strain E24377A / ETEC) protein is Adenylyl-sulfate kinase.